We begin with the raw amino-acid sequence, 287 residues long: MAEARASRWYFGGLASCGAACCTHPLDLLKVHLQTQQEVKLRMTGMALQVVRTDGFLALYNGLSASLCRQMTYSLTRFAIYETMRDYMTKDSQGPLPFYNKVLLGGISGLTGGFVGTPADLVNVRMQNDMKLPPSQRRNYSHALDGLYRVAREESLRKLFSGATMASSRGALVTVGQLSCYDQAKQLVLSTGYLSDNIFTHFVSSFIAGGCATFLCQPLDVLKTRLMNSKGEYQGVFHCAMETAKLGPQAFFKGLFPAGIRLIPHTVLTFMFLEQLRKHFGIKVPTT.

3 Solcar repeats span residues 7-87 (SRWY…MRDY), 100-187 (NKVL…AKQL), and 196-279 (DNIF…LRKH). The next 3 helical transmembrane spans lie at 9–29 (WYFGGLASCGAACCTHPLDLL), 62–81 (GLSASLCRQMTYSLTRFAIY), and 102–122 (VLLGGISGLTGGFVGTPADLV). Residue K158 is modified to N6-acetyllysine. The next 3 membrane-spanning stretches (helical) occupy residues 162–181 (GATMASSRGALVTVGQLSCY), 202–222 (FVSSFIAGGCATFLCQPLDVL), and 254–274 (GLFPAGIRLIPHTVLTFMFLE).

It belongs to the mitochondrial carrier (TC 2.A.29) family. In terms of tissue distribution, expressed at very high levels in white adipose tissue. And at low levels in brown adipose tissue, kidney and liver.

Its subcellular location is the mitochondrion inner membrane. The catalysed reaction is (S)-malate(in) + phosphate(out) = (S)-malate(out) + phosphate(in). It catalyses the reaction malonate(out) + (S)-malate(in) = malonate(in) + (S)-malate(out). The enzyme catalyses (S)-malate(in) + succinate(out) = (S)-malate(out) + succinate(in). It carries out the reaction (S)-malate(in) + sulfate(out) = (S)-malate(out) + sulfate(in). The catalysed reaction is malonate(out) + phosphate(in) = malonate(in) + phosphate(out). It catalyses the reaction succinate(out) + phosphate(in) = succinate(in) + phosphate(out). The enzyme catalyses sulfate(out) + phosphate(in) = sulfate(in) + phosphate(out). It carries out the reaction malonate(out) + succinate(in) = malonate(in) + succinate(out). Regulated by circadian protein CLOCK (Circadian Locomotor Output Cycles Kaput). Its function is as follows. Catalyzes the electroneutral exchange or flux of physiologically important metabolites such as dicarboxylates (malonate, malate, succinate), inorganic sulfur-containing anions, and phosphate, across mitochondrial inner membrane. Plays an important role in gluconeogenesis, fatty acid metabolism, urea synthesis, and sulfur metabolism, particularly in liver, by supplying the substrates for the different metabolic processes. Regulates fatty acid release from adipocytes, and contributes to systemic insulin sensitivity. The protein is Mitochondrial dicarboxylate carrier of Mus musculus (Mouse).